Consider the following 420-residue polypeptide: S-adenosylmethionine synthase (420 aa).

Position 16 (H16) interacts with ATP. D18 is a binding site for Mg(2+). E44 lines the K(+) pocket. Residues E57 and Q100 each contribute to the L-methionine site. The flexible loop stretch occupies residues 100-110 (QSADIAQGVDK). ATP-binding positions include 175–177 (DGK), 251–252 (KF), D260, 266–267 (RK), A283, and K287. Residue D260 coordinates L-methionine. K291 serves as a coordination point for L-methionine.

It belongs to the AdoMet synthase family. In terms of assembly, homotetramer; dimer of dimers. Requires Mg(2+) as cofactor. K(+) is required as a cofactor.

It localises to the cytoplasm. The enzyme catalyses L-methionine + ATP + H2O = S-adenosyl-L-methionine + phosphate + diphosphate. Its pathway is amino-acid biosynthesis; S-adenosyl-L-methionine biosynthesis; S-adenosyl-L-methionine from L-methionine: step 1/1. Functionally, catalyzes the formation of S-adenosylmethionine (AdoMet) from methionine and ATP. The overall synthetic reaction is composed of two sequential steps, AdoMet formation and the subsequent tripolyphosphate hydrolysis which occurs prior to release of AdoMet from the enzyme. This Trichodesmium erythraeum (strain IMS101) protein is S-adenosylmethionine synthase.